We begin with the raw amino-acid sequence, 311 residues long: Homoserine O-acetyltransferase (311 aa).

Cys142 serves as the catalytic Acyl-thioester intermediate. Lys163 and Ser192 together coordinate substrate. His235 functions as the Proton acceptor in the catalytic mechanism. Glu237 is an active-site residue. Position 249 (Arg249) interacts with substrate.

Belongs to the MetA family.

The protein localises to the cytoplasm. It catalyses the reaction L-homoserine + acetyl-CoA = O-acetyl-L-homoserine + CoA. The protein operates within amino-acid biosynthesis; L-methionine biosynthesis via de novo pathway; O-acetyl-L-homoserine from L-homoserine: step 1/1. Its function is as follows. Transfers an acetyl group from acetyl-CoA to L-homoserine, forming acetyl-L-homoserine. In Lysinibacillus sphaericus (strain C3-41), this protein is Homoserine O-acetyltransferase.